An 814-amino-acid polypeptide reads, in one-letter code: Echinoderm microtubule-associated protein-like 1 (814 aa).

A coiled-coil region spans residues 31–72; it reads SMEVSDRIASLEQRVQMQEDDIQLLKSALADVVRRLNITEEQ. The disordered stretch occupies residues 77–180; sequence NRKGPTKARP…ESKPKEPAFS (104 aa). Positions 92–101 are enriched in polar residues; sequence PLRTTVNNGT. Residues 103–115 are compositionally biased toward low complexity; it reads LPKKPSASLPAPS. Residues 127–137 are compositionally biased toward polar residues; that stretch reads KSINRTSSSER. Basic and acidic residues predominate over residues 142–152; sequence GRRESSGDSKG. The segment covering 155-167 has biased composition (low complexity); it reads NRTGSTSSSSSGK. Residues 175-814 are tandem atypical propeller in EMLs; the sequence is KEPAFSPEEG…DTSIMQWRVI (640 aa). WD repeat units lie at residues 260–309, 314–357, 362–399, 408–445, 449–488, 492–529, 534–571, 577–612, 616–654, 663–700, 708–767, and 774–813; these read EQLQ…IWDS, TLHV…VWDW, RLAD…FWTL, QGLF…VWGK, RISY…SWNG, KLHK…LQGT, FTPI…LWDA, VWDK…VFDT, DLVT…IYGV, RVGK…YWVP, SVET…LFSY, and APSH…QWRV.

The protein belongs to the WD repeat EMAP family. In terms of assembly, homotrimer; self-association is mediated by the N-terminal coiled coil. Does not interact with EML3. Binds unpolymerized tubulins via its WD repeat region. Binds repolymerizing microtubules. Interacts with TASOR. As to expression, detected in adult brain cortex, hippocampus and thalamus. Expressed in the stomach, lungs and in Sertoli cells of the testis.

It is found in the cytoplasm. It localises to the perinuclear region. The protein localises to the cytoskeleton. Functionally, modulates the assembly and organization of the microtubule cytoskeleton, and probably plays a role in regulating the orientation of the mitotic spindle and the orientation of the plane of cell division. Required for normal proliferation of neuronal progenitor cells in the developing brain and for normal brain development. Does not affect neuron migration per se. The chain is Echinoderm microtubule-associated protein-like 1 (Eml1) from Mus musculus (Mouse).